Here is a 169-residue protein sequence, read N- to C-terminus: MYIPKHFESMELSRYKLSKKPPLGTLFSSKASRQGFFGWRTSSNKDDPDFGMCASHIPFVFVEFDNGEHKLIAHLARKNKHVEMLERVQKCLVVFQSVDSYISPAWFPMKKKTHKFVPTWDFAAVHVYGTPRIIRDDKDWLINMLSTLTDQEEEKRPEGENVRSKVERF.

This is an uncharacterized protein from Saccharomyces cerevisiae (strain ATCC 204508 / S288c) (Baker's yeast).